Consider the following 423-residue polypeptide: MERMLPLLALGLLAAGFCPAVLCHPNSPLDEENLTQENQDRGTHVDLGLASANVDFAFSLYKQLVLKAPDKNVIFSPLSISTALAFLSLGAHNTTLTEILKGLKFNLTETSEAEIHQSFQHLLRTLNQSSDELQLSMGNAMFVKEQLSLLDRFTEDAKRLYGSEAFATDFQDSAAAKKLINDYVKNGTRGKITDLIKDLDSQTMMVLVNYIFFKAKWEMPFDPQDTHQSRFYLSKKKWVMVPMMSLHHLTIPYFRDEELSCTVVELKYTGNASALFILPDQDKMEEVEAMLLPETLKRWRDSLEFREIGELYLPKFSISRDYNLNDILLQLGIEEAFTSKADLSGITGARNLAVSQVVHKAVLDVFEEGTEASAATAVKITLLSALVETRTIVRFNRPFLMIIVPTDTQNIFFMSKVTNPKQA.

Positions 1-23 are cleaved as a signal peptide; it reads MERMLPLLALGLLAAGFCPAVLC. N-linked (GlcNAc...) asparagine glycans are attached at residues Asn-33, Asn-93, Asn-106, Asn-127, and Asn-186. The DNA-binding element occupies 235 to 237; the sequence is KKK. N-linked (GlcNAc...) asparagine glycosylation is present at Asn-271. Positions 369–394 are RCL; it reads GTEASAATAVKITLLSALVETRTIVR. Positions 381 to 389 are O-glycosylated at one site; it reads TLLSALVET.

Belongs to the serpin family. Interacts with DNAJC1. In terms of processing, N- and O-glycosylated. As to expression, plasma. Synthesized in the liver. Like the related alpha-1-antitrypsin, its concentration increases in the acute phase of inflammation or infection. Found in the amyloid plaques from the hippocampus of Alzheimer disease brains.

It localises to the secreted. Although its physiological function is unclear, it can inhibit neutrophil cathepsin G and mast cell chymase, both of which can convert angiotensin-1 to the active angiotensin-2. The sequence is that of Alpha-1-antichymotrypsin (SERPINA3) from Homo sapiens (Human).